The primary structure comprises 506 residues: NAD(P)H-quinone oxidoreductase chain 4, chloroplastic (506 aa).

14 helical membrane passes run 5–25 (FPLL…IPFL), 35–55 (WYTL…FIYK), 88–108 (MPLI…AWPI), 114–134 (LFYF…LSQD), 135–155 (ILLF…LLSL), 168–188 (FILY…TMAF), 209–229 (ALEI…LPAF), 243–263 (HYST…YGLI), 275–295 (VIFS…GALT), 309–329 (SSIS…DLGL), 331–351 (GAMM…FLAG), 386–406 (SLAL…LGFL), 415–435 (FIAL…IYLL), and 463–483 (IFIM…PNLT).

The protein belongs to the complex I subunit 4 family.

Its subcellular location is the plastid. The protein localises to the chloroplast thylakoid membrane. The catalysed reaction is a plastoquinone + NADH + (n+1) H(+)(in) = a plastoquinol + NAD(+) + n H(+)(out). The enzyme catalyses a plastoquinone + NADPH + (n+1) H(+)(in) = a plastoquinol + NADP(+) + n H(+)(out). This is NAD(P)H-quinone oxidoreductase chain 4, chloroplastic from Chaetosphaeridium globosum (Charophycean green alga).